The primary structure comprises 466 residues: MNLTHIHSVYLIGIGGIGMSALARWFKQNNYNVGGYDKTSSDLTKALEAEGMAVHYTDSMAEVPEAFTKKDSVLVIYTPAIPADHLELNFFRENGYALYKRSQVLGFLTKELKTIGIAGTHGKTTTSSMAAHIMHESGMPCSAFLGGITQNYNTNILIGNHGDGAGWVVAEADEYDRSFLQLSPDIAVINNMDPDHLDIYSDVQSFYDSFNEYLKKLKPGGIVIRRVDVDVQIPSHASLSVTFGESVEADYRIQNVVVEDGGVTFSIDHDFTRWNNIRIEMPGMHNVMNATAAFLAAHFAGVSIDSIKASLRSFGGVKRRFEYIYKNTKLVYVDDYAHHPTELEALLKAVRMVFPGKKVVTVFQPHLFSRTRDFMQEFAQSLALTDELLLMEIYPARELPIEGITSDVLLNLIPSTNKKVVSKESLLTELEKLNFDVVITAGAGDIDRFIQPIKLLCEQRYGKANG.

119-125 contributes to the ATP binding site; sequence GTHGKTT.

The protein belongs to the MurCDEF family.

It localises to the cytoplasm. The catalysed reaction is UDP-N-acetyl-alpha-D-muramate + L-alanine + ATP = UDP-N-acetyl-alpha-D-muramoyl-L-alanine + ADP + phosphate + H(+). Its pathway is cell wall biogenesis; peptidoglycan biosynthesis. Functionally, cell wall formation. The sequence is that of UDP-N-acetylmuramate--L-alanine ligase from Cytophaga hutchinsonii (strain ATCC 33406 / DSM 1761 / CIP 103989 / NBRC 15051 / NCIMB 9469 / D465).